The sequence spans 298 residues: Enoyl-CoA hydratase AKT6-1 (298 aa).

Residues 1–23 (MTFSTTKSVAMSPDDDAPSFDIN) form a disordered region.

The protein belongs to the enoyl-CoA hydratase/isomerase family.

It participates in mycotoxin biosynthesis. Functionally, enoyl-CoA hydratase; part of the gene clusters that mediate the biosynthesis of the host-selective toxins (HSTs) AK-toxins responsible for Japanese pear black spot disease by the Japanese pear pathotype. AK-toxins are esters of 9,10-epoxy 8-hydroxy 9-methyldecatrienoic acid (EDA). On cellular level, AK-toxins affect plasma membrane of susceptible cells and cause a sudden increase in loss of K(+) after a few minutes of toxin treatment. The acyl-CoA ligase AKT1, the hydrolase AKT2 and enoyl-CoA hydratase AKT3 are all involved in the biosynthesis of the AK-, AF- and ACT-toxin common 9,10-epoxy-8-hydroxy-9-methyl-decatrienoic acid (EDA) structural moiety. Part of the EDA biosynthesis occurs in the peroxisome since these 3 enzymes are localized in peroxisomes. The exact roles of the 3 enzymes, as well as of additional AK-toxin clusters enzymes, including AKT4, AKT6 and AKTS1, have still to be elucidated. The Cytochrome P450 monooxygenase AKT7 on the other side functions to limit production of EDA and AK-toxin, probably via the catalysis of a side reaction of EDA or its precursor. This Alternaria alternata (Alternaria rot fungus) protein is Enoyl-CoA hydratase AKT6-1.